The chain runs to 389 residues: Succinyl-diaminopimelate desuccinylase (389 aa).

Zn(2+) is bound at residue H72. Residue D74 is part of the active site. D105 contacts Zn(2+). The active-site Proton acceptor is the E144. Zn(2+) is bound by residues E145, E173, and H362.

The protein belongs to the peptidase M20A family. DapE subfamily. As to quaternary structure, homodimer. It depends on Zn(2+) as a cofactor. Co(2+) is required as a cofactor.

The enzyme catalyses N-succinyl-(2S,6S)-2,6-diaminopimelate + H2O = (2S,6S)-2,6-diaminopimelate + succinate. It functions in the pathway amino-acid biosynthesis; L-lysine biosynthesis via DAP pathway; LL-2,6-diaminopimelate from (S)-tetrahydrodipicolinate (succinylase route): step 3/3. Catalyzes the hydrolysis of N-succinyl-L,L-diaminopimelic acid (SDAP), forming succinate and LL-2,6-diaminopimelate (DAP), an intermediate involved in the bacterial biosynthesis of lysine and meso-diaminopimelic acid, an essential component of bacterial cell walls. The protein is Succinyl-diaminopimelate desuccinylase of Nitrobacter hamburgensis (strain DSM 10229 / NCIMB 13809 / X14).